The primary structure comprises 101 residues: Small ribosomal subunit protein uS14 (101 aa).

The protein belongs to the universal ribosomal protein uS14 family. In terms of assembly, part of the 30S ribosomal subunit. Contacts proteins S3 and S10.

Its function is as follows. Binds 16S rRNA, required for the assembly of 30S particles and may also be responsible for determining the conformation of the 16S rRNA at the A site. This is Small ribosomal subunit protein uS14 from Brucella abortus (strain 2308).